We begin with the raw amino-acid sequence, 605 residues long: MEIVYVYVKKRSEFGKQCNFSDRQAELNIDIMPNPELAEQFVERNPVDTGIQCSISMSEHEANSERFEMETRGVNHVEGGWPKDVNPLELEQTIRFRKKVEKDENYVNAIMQLGSIMEHCIKQNNAIDIYEEYFNDEEAMEVMEEDPSAKTINVFRDPQEIKRAATHLSWHPDGNRKLAVAYSCLDFQRAPVGMSSDSYIWDLENPNKPELALKPSSPLVTLEFNPKDSHVLLGGCYNGQIACWDTRKGSLVAELSTIESSHRDPVYGTIWLQSKTGTECFSASTDGQVMWWDIRKMSEPTEVVILDITKKEQLENALGAISLEFESTLPTKFMVGTEQGIVISCNRKAKTSAEKIVCTFPGHHGPIYALQRNPFYPKNFLTVGDWTARIWSEDSRESSIMWTKYHMAYLTDAAWSPVRPTVFFTTRMDGTLDIWDFMFEQCDPTLSLKVCDEALFCLRVQDNGCLIACGSQLGTTTLLEVSPGLSTLQRNEKNVASSMFERETRREKILEARHREMRLKEKGKAEGRDEEQTDEELAVDLEALVSKAEEEFFDIIFAELKKKEADAIKLTPVPQQPSPEEDQVVEEGEEAAGEEGDEEVEEDLA.

WD repeat units follow at residues K150–L203, K208–T246, A253–I294, T301–R347, K355–E393, S399–F437, and D443–V481. The segment at I568–A605 is disordered. The segment covering P579–A605 has biased composition (acidic residues).

It belongs to the dynein intermediate chain family. In terms of assembly, consists of at least two heavy chains and a number of intermediate and light chains. Interacts with DNAAF2. Interacts with DNAAF6/PIH1D3. Interacts with HEATR2; probably involved in outer arm dynein assembly. Interacts with CFAP53. In terms of tissue distribution, highly expressed in trachea and testis. Expressed in respiratory ciliated cells (at protein level).

Its subcellular location is the cytoplasm. It is found in the cytoskeleton. It localises to the cilium axoneme. The protein resides in the dynein axonemal particle. Part of the dynein complex of respiratory cilia. The polypeptide is Dynein axonemal intermediate chain 2 (Homo sapiens (Human)).